The primary structure comprises 332 residues: Glycerol-3-phosphate dehydrogenase [NAD(P)+] (332 aa).

Residues Ser11, Trp12, Arg32, Arg33, and Lys106 each contribute to the NADPH site. The sn-glycerol 3-phosphate site is built by Lys106 and Gly136. Ala140 is an NADPH binding site. Residues Lys191, Asp244, Ser254, Arg255, and Asn256 each contribute to the sn-glycerol 3-phosphate site. The Proton acceptor role is filled by Lys191. Position 255 (Arg255) interacts with NADPH. NADPH is bound by residues Val280 and Glu282.

It belongs to the NAD-dependent glycerol-3-phosphate dehydrogenase family.

It is found in the cytoplasm. The catalysed reaction is sn-glycerol 3-phosphate + NAD(+) = dihydroxyacetone phosphate + NADH + H(+). It catalyses the reaction sn-glycerol 3-phosphate + NADP(+) = dihydroxyacetone phosphate + NADPH + H(+). Its pathway is membrane lipid metabolism; glycerophospholipid metabolism. Its function is as follows. Catalyzes the reduction of the glycolytic intermediate dihydroxyacetone phosphate (DHAP) to sn-glycerol 3-phosphate (G3P), the key precursor for phospholipid synthesis. This is Glycerol-3-phosphate dehydrogenase [NAD(P)+] from Corynebacterium kroppenstedtii (strain DSM 44385 / JCM 11950 / CIP 105744 / CCUG 35717).